We begin with the raw amino-acid sequence, 235 residues long: MTELARLKFYATQPHSCSYLPDEQATTLFLDPSQPMDVHVYADLSEMGFRRSGDHLYRPHCQNCNACVPARIPATQFLPSRQQKRIIKRNSDLTVHAAKPCFSEEYFDLYQRYIEQRHADGDMFPPSRDQFSTFLVRDLPFSRFYEFRLDGRLLAVAVTDLLPNGLSAVYTFYEPDEERRSLGRFAILWQIGETLRLGLDAVYLGYWIKNCKKMNYKTQYRPIELLVNQRWVILN.

This sequence belongs to the R-transferase family. Bpt subfamily.

It is found in the cytoplasm. The catalysed reaction is N-terminal L-glutamyl-[protein] + L-leucyl-tRNA(Leu) = N-terminal L-leucyl-L-glutamyl-[protein] + tRNA(Leu) + H(+). It catalyses the reaction N-terminal L-aspartyl-[protein] + L-leucyl-tRNA(Leu) = N-terminal L-leucyl-L-aspartyl-[protein] + tRNA(Leu) + H(+). Functions in the N-end rule pathway of protein degradation where it conjugates Leu from its aminoacyl-tRNA to the N-termini of proteins containing an N-terminal aspartate or glutamate. This chain is Aspartate/glutamate leucyltransferase, found in Pseudomonas fluorescens (strain ATCC BAA-477 / NRRL B-23932 / Pf-5).